A 335-amino-acid polypeptide reads, in one-letter code: Beta-ketoacyl-[acyl-carrier-protein] synthase III (335 aa).

Catalysis depends on residues cysteine 119 and histidine 261. The tract at residues 262–266 (QANQR) is ACP-binding. Residue asparagine 291 is part of the active site.

Belongs to the thiolase-like superfamily. FabH family. As to quaternary structure, homodimer.

The protein localises to the cytoplasm. The catalysed reaction is malonyl-[ACP] + acetyl-CoA + H(+) = 3-oxobutanoyl-[ACP] + CO2 + CoA. It participates in lipid metabolism; fatty acid biosynthesis. Functionally, catalyzes the condensation reaction of fatty acid synthesis by the addition to an acyl acceptor of two carbons from malonyl-ACP. Catalyzes the first condensation reaction which initiates fatty acid synthesis and may therefore play a role in governing the total rate of fatty acid production. Possesses both acetoacetyl-ACP synthase and acetyl transacylase activities. Its substrate specificity determines the biosynthesis of branched-chain and/or straight-chain of fatty acids. The protein is Beta-ketoacyl-[acyl-carrier-protein] synthase III of Prochlorococcus marinus (strain MIT 9312).